The chain runs to 106 residues: uncharacterized protein (106 aa).

The N-terminal stretch at 1–22 (MKKHPNLLLGFSVYLSAGTKLT) is a signal peptide. Positions 23 to 46 (IPPEAEQHTAPSDNNKRKRAKCDD) are disordered.

This is an uncharacterized protein from Arabidopsis thaliana (Mouse-ear cress).